Consider the following 535-residue polypeptide: Intercellular adhesion molecule 1 (535 aa).

The signal sequence occupies residues 1-27 (MALGAAPAAQLALLALLGTLLPGPGGA). At 28-480 (GISIHPSKAI…LNVLHGQNIL (453 aa)) the chain is on the extracellular side. The Ig-like C2-type 1 domain maps to 41 to 102 (GDSLTVNCSN…SNCHKEQTIA (62 aa)). Asparagine 47 is a glycosylation site (N-linked (GlcNAc...) asparagine). 2 disulfides stabilise this stretch: cysteine 48–cysteine 91 and cysteine 52–cysteine 95. N-linked (GlcNAc...) asparagine glycosylation is found at asparagine 105 and asparagine 131. Residues 127–193 (GEELNLSCLV…FSCRWELDLR (67 aa)) form the Ig-like C2-type 2 domain. Cysteines 134 and 186 form a disulfide. The short motif at 151–153 (RGE) is the Cell attachment site; atypical element. N-linked (GlcNAc...) asparagine glycans are attached at residues asparagine 183, asparagine 202, asparagine 236, asparagine 262, asparagine 302, asparagine 341, asparagine 357, asparagine 366, asparagine 404, and asparagine 428. Residues 230–295 (GSRWPVNCTL…LKCSVTLGEV (66 aa)) enclose the Ig-like C2-type 3 domain. The cysteines at positions 237 and 288 are disulfide-linked. The 54-residue stretch at 323–376 (WTTVTVECVTRDGAVVKLNGTSAVPPGPRAQLKLNASASDHRSNFSCSAALEIA) folds into the Ig-like C2-type 4 domain. 4 disulfides stabilise this stretch: cysteine 330–cysteine 369, cysteine 401–cysteine 417, cysteine 417–cysteine 456, and cysteine 429–cysteine 456. One can recognise an Ig-like C2-type 5 domain in the interval 410 to 463 (GSEQTLKCEAQGNPIPKLNCSRKGDGASLPIGDLRPVRREVAGTYLCRATSARG). Residues 481-503 (DIVIPVVAVTLILGALGTAGYVY) traverse the membrane as a helical segment. Over 504–535 (NYQRKIQKYELQKARKAQEEAALKLNAQSTPP) the chain is Cytoplasmic. The residue at position 533 (threonine 533) is a Phosphothreonine.

This sequence belongs to the immunoglobulin superfamily. ICAM family. Homodimer. Interacts with MUC1 and promotes cell aggregation in epithelial cells. Interacts with ARHGEF26/SGEF. Interacts (on T cell side) with CD81, CD247 and CD9 at immunological synapses between antigen-presenting cells and T cells. Post-translationally, monoubiquitinated, which is promoted by MARCH9 and leads to endocytosis.

It is found in the membrane. ICAM proteins are ligands for the leukocyte adhesion protein LFA-1 (integrin alpha-L/beta-2). During leukocyte trans-endothelial migration, ICAM1 engagement promotes the assembly of endothelial apical cups through ARHGEF26/SGEF and RHOG activation. This chain is Intercellular adhesion molecule 1 (ICAM1), found in Bos taurus (Bovine).